We begin with the raw amino-acid sequence, 179 residues long: MINFLLFVLTILATLTNIWFSGVLSPAMVIRICLGGSMVVLQIWSFSRPISNETFRTKLLLEVITHRPSIAGKEWKTITYNMNQYLFKAGLWKTPYHFFCEHQCYEFFKDLIKGKYPDVQWDTANTQPFISVPENQAATQNSDVEPTVKWCLFKAAEIQAHAVREYWQSQYPDVGIPAI.

Transmembrane regions (helical) follow at residues 4–24 and 26–46; these read FLLFVLTILATLTNIWFSGVL and PAMVIRICLGGSMVVLQIWSF.

The protein belongs to the DUP/COS family.

It localises to the membrane. This is Putative DUP240 protein DFP1 from Saccharomyces cerevisiae (strain ATCC 204508 / S288c) (Baker's yeast).